Consider the following 218-residue polypeptide: Adenylate kinase (218 aa).

10–15 (GAGKGT) contacts ATP. The tract at residues 30–59 (STGDMLRAAVKAGTPLGLEAKKVMDAGGLV) is NMP. AMP is bound by residues Thr-31, Arg-36, 57–59 (GLV), 85–88 (GFPR), and Gln-92. Residues 122 to 159 (GRRVHVASGRTYHVKFNPPKVAGKDDETGEDLIQRADD) form an LID region. ATP is bound by residues Arg-123 and 132–133 (TY). AMP-binding residues include Arg-156 and Arg-167. Gly-203 provides a ligand contact to ATP.

It belongs to the adenylate kinase family. In terms of assembly, monomer.

The protein localises to the cytoplasm. It carries out the reaction AMP + ATP = 2 ADP. It functions in the pathway purine metabolism; AMP biosynthesis via salvage pathway; AMP from ADP: step 1/1. Catalyzes the reversible transfer of the terminal phosphate group between ATP and AMP. Plays an important role in cellular energy homeostasis and in adenine nucleotide metabolism. This Laribacter hongkongensis (strain HLHK9) protein is Adenylate kinase.